The sequence spans 119 residues: Large ribosomal subunit protein uL18 (119 aa).

This sequence belongs to the universal ribosomal protein uL18 family. Part of the 50S ribosomal subunit; part of the 5S rRNA/L5/L18/L25 subcomplex. Contacts the 5S and 23S rRNAs.

Functionally, this is one of the proteins that bind and probably mediate the attachment of the 5S RNA into the large ribosomal subunit, where it forms part of the central protuberance. The polypeptide is Large ribosomal subunit protein uL18 (Staphylococcus aureus (strain Mu3 / ATCC 700698)).